Consider the following 299-residue polypeptide: Quinolinate synthase (299 aa).

2 residues coordinate iminosuccinate: histidine 21 and serine 38. Residue cysteine 83 coordinates [4Fe-4S] cluster. Residues tyrosine 109–asparagine 111 and serine 126 contribute to the iminosuccinate site. Residue cysteine 170 coordinates [4Fe-4S] cluster. Iminosuccinate-binding positions include histidine 196–glutamate 198 and threonine 213. Cysteine 256 contributes to the [4Fe-4S] cluster binding site.

It belongs to the quinolinate synthase family. Type 2 subfamily. [4Fe-4S] cluster is required as a cofactor.

The protein localises to the cytoplasm. It carries out the reaction iminosuccinate + dihydroxyacetone phosphate = quinolinate + phosphate + 2 H2O + H(+). The protein operates within cofactor biosynthesis; NAD(+) biosynthesis; quinolinate from iminoaspartate: step 1/1. Catalyzes the condensation of iminoaspartate with dihydroxyacetone phosphate to form quinolinate. This Pyrococcus abyssi (strain GE5 / Orsay) protein is Quinolinate synthase.